Consider the following 1910-residue polypeptide: Chromatin-remodeling ATPase INO80 (1910 aa).

3 disordered regions span residues 1–487 (MSGE…NEEN), 548–611 (QQEA…DDDD), and 630–673 (NIIK…TLAD). The span at 49 to 59 (GYDRHLRERVH) shows a compositional bias: basic and acidic residues. A compositionally biased stretch (pro residues) spans 69–84 (GVPPPPPTDYRRPPPQ). Composition is skewed to basic and acidic residues over residues 118–133 (DAYREADDRRSFEQAR), 167–199 (ISVRDDARSAPENRHIDEPAVYRRDEYDAHSRE), and 222–231 (AHERSSEYAT). 2 stretches are compositionally biased toward polar residues: residues 257–266 (SIFNMLNDRS) and 311–320 (QSYSTARDSQ). The segment covering 321-334 (AYSRGSEARAGAAR) has biased composition (low complexity). Residues 349 to 362 (QRRNSSAHQQSSIK) show a composition bias toward polar residues. Basic and acidic residues-rich tracts occupy residues 374–383 (PLIRVKHEEA) and 548–572 (QQEASQRDMERRQDHVRQQRDHEID). Acidic residues predominate over residues 599 to 611 (DDGLLQADDDDDD). The DBINO domain maps to 726 to 851 (IWTTIAKRDV…SHFVGSKLKT (126 aa)). Residues 790 to 840 (LVFWKRNEKEERELRKKAEREALEKAKKEEEMREAKRQARKLNFLISQTEL) are a coiled coil. The tract at residues 852–878 (AEAEESEETAGSSKIIDPNAQPSDATV) is disordered. In terms of domain architecture, Helicase ATP-binding spans 1010–1182 (ANLYEQGING…WALLHFIMPS (173 aa)). 1023 to 1030 (DEMGLGKT) provides a ligand contact to ATP. The short motif at 1133–1136 (DEAQ) is the DEAQ box element. A Helicase C-terminal domain is found at 1583–1747 (KLDVLLRELK…AKPQEIVSLL (165 aa)). The interval 1760–1910 (KKQAEEAQTA…VDELAGVDLD (151 aa)) is disordered. Residues 1840 to 1850 (VGGGGGGSGGA) are compositionally biased toward gly residues. Positions 1888–1899 (AAKRKSKSHRKK) are enriched in basic residues.

It belongs to the SNF2/RAD54 helicase family. As to quaternary structure, component of the INO80 chromatin-remodeling complex.

The protein resides in the nucleus. The catalysed reaction is ATP + H2O = ADP + phosphate + H(+). Functionally, ATPase component of the INO80 complex which remodels chromatin by shifting nucleosomes and is involved in DNA repair. The protein is Chromatin-remodeling ATPase INO80 (INO80) of Mycosarcoma maydis (Corn smut fungus).